The following is a 239-amino-acid chain: Sugar fermentation stimulation protein homolog (239 aa).

It belongs to the SfsA family.

The chain is Sugar fermentation stimulation protein homolog from Mannheimia succiniciproducens (strain KCTC 0769BP / MBEL55E).